Here is a 359-residue protein sequence, read N- to C-terminus: RNA-binding protein 4B (359 aa).

RRM domains follow at residues 2-72 (VKLF…ASKN) and 78-148 (TKLH…LSTS). The CCHC-type zinc finger occupies 160-177 (SGCYRCGKEGHWSKECPV). Residues 196 to 359 (AVRPPYTMGY…YVDRARYSAF (164 aa)) are interaction with TNPO3.

In terms of assembly, interacts with TNPO3, which may mediate nuclear import of the protein.

Its subcellular location is the nucleus. The protein resides in the nucleolus. Its function is as follows. Required for the translational activation of PER1 mRNA in response to circadian clock. Binds directly to the 3'-UTR of the PER1 mRNA. The sequence is that of RNA-binding protein 4B (RBM4B) from Sus scrofa (Pig).